The following is a 363-amino-acid chain: MRVSDFNFDLPDELIARYPKTDRVSCRLLQLNGENGEIFHRTFSDVLDLIDQGDLLIFNNTHVIPARMFGRKASGGKIEVLVERMLDEHRFLAHIRSSKSPKEGAELFLGEDKLGENNGIKAVMKARHSSLFEVELSDKSTALLDVLQTIGHMPLPPYIDRPDEEADKECYQTVYSKVPGAVAAPTAGLHFDKNLLEKLKAKGVNFEFVTLHVGAGTFQPVRVENIEDHVMHAEYVEVSQEVCNAIIATKKAGKRVIAVGTTSVRSIESAALSAEEFGNPDLIEPYFSDTSIFIYPGKKFRVVDCLITNFHLPESTLIMLVSAFAGYKNTMNAYKHAVQEKYRFFSYGDAMFINKNSNVRELE.

This sequence belongs to the QueA family. As to quaternary structure, monomer.

Its subcellular location is the cytoplasm. The enzyme catalyses 7-aminomethyl-7-carbaguanosine(34) in tRNA + S-adenosyl-L-methionine = epoxyqueuosine(34) in tRNA + adenine + L-methionine + 2 H(+). It participates in tRNA modification; tRNA-queuosine biosynthesis. In terms of biological role, transfers and isomerizes the ribose moiety from AdoMet to the 7-aminomethyl group of 7-deazaguanine (preQ1-tRNA) to give epoxyqueuosine (oQ-tRNA). This is S-adenosylmethionine:tRNA ribosyltransferase-isomerase from Haemophilus influenzae (strain 86-028NP).